Consider the following 181-residue polypeptide: Sodium/potassium-transporting ATPase subunit beta-1-interacting protein 3 (181 aa).

4 helical membrane passes run 5-22, 35-55, 62-82, and 151-171; these read TGRC…LVAL, APIL…FGTI, IVAY…IICF, and AVQI…ISVI.

Belongs to the NKAIN family. As to quaternary structure, interacts with atp1b1 C-terminus.

Its subcellular location is the cell membrane. This is Sodium/potassium-transporting ATPase subunit beta-1-interacting protein 3 (nkain3) from Xenopus tropicalis (Western clawed frog).